The sequence spans 352 residues: Palmitoyltransferase PFA5 (352 aa).

2 consecutive transmembrane segments (helical) span residues 12–32 and 53–73; these read YWTI…GTWA and IGLI…WVLI. The DHHC domain occupies 114–164; the sequence is VWCSNCQSLKVGRTKHSSHQGHCVPRFDHYCVWLGAVIGFKNYRLFVQFVF. The S-palmitoyl cysteine intermediate role is filled by cysteine 144. 2 helical membrane-spanning segments follow: residues 159–179 and 195–215; these read FVQF…TISV and LIVL…LFVS.

It belongs to the DHHC palmitoyltransferase family. PFA5 subfamily.

It is found in the membrane. The enzyme catalyses L-cysteinyl-[protein] + hexadecanoyl-CoA = S-hexadecanoyl-L-cysteinyl-[protein] + CoA. This is Palmitoyltransferase PFA5 (PFA5) from Candida glabrata (strain ATCC 2001 / BCRC 20586 / JCM 3761 / NBRC 0622 / NRRL Y-65 / CBS 138) (Yeast).